The following is a 270-amino-acid chain: Monocyte to macrophage differentiation factor 2 (270 aa).

The Cytoplasmic segment spans residues 1–38 (MFAPRLLDFQKTKYARFMNHRVPAHKRYQPTEYEHAAN). A helical membrane pass occupies residues 39-59 (CATHAFWIIPSILGSSNLYFL). Over 60 to 65 (SDDDWE) the chain is Lumenal. Residues 66 to 86 (TISAWIYGLGLCGLFVVSTVF) form a helical membrane-spanning segment. At 87–102 (HTISWKKSHLRMVEHC) the chain is on the cytoplasmic side. A helical transmembrane segment spans residues 103–123 (LHMFDRMVIYFFIAASYAPWL). At 124 to 132 (NLRELGPWA) the chain is on the lumenal side. A helical membrane pass occupies residues 133-153 (SHMRWLVWIMASVGTIYVFFF). At 154–182 (HERTGSCVQFLRGEACPKAGTACLPARYK) the chain is on the cytoplasmic side. Residues 183-203 (LVELLCYVVMGFFPALVILSM) form a helical membrane-spanning segment. Residues 204–205 (PN) lie on the Lumenal side of the membrane. The helical transmembrane segment at 206–226 (TEGIWELVTGGVFYCLGMVFF) threads the bilayer. Residues 227-233 (KSDGRIP) lie on the Cytoplasmic side of the membrane. A helical transmembrane segment spans residues 234–254 (FAHAIWHLFVAFGAGTHYYAI). Over 255–270 (WRYLYLPSTLQTKVSK) the chain is Lumenal.

This sequence belongs to the ADIPOR family. Shows restricted expression with highest levels in brain and testis.

It localises to the golgi apparatus membrane. The chain is Monocyte to macrophage differentiation factor 2 from Homo sapiens (Human).